The following is a 98-amino-acid chain: Large ribosomal subunit protein uL23 (98 aa).

This sequence belongs to the universal ribosomal protein uL23 family. Part of the 50S ribosomal subunit. Contacts protein L29, and trigger factor when it is bound to the ribosome.

In terms of biological role, one of the early assembly proteins it binds 23S rRNA. One of the proteins that surrounds the polypeptide exit tunnel on the outside of the ribosome. Forms the main docking site for trigger factor binding to the ribosome. This chain is Large ribosomal subunit protein uL23, found in Halorhodospira halophila (strain DSM 244 / SL1) (Ectothiorhodospira halophila (strain DSM 244 / SL1)).